Consider the following 96-residue polypeptide: Small ribosomal subunit protein bS6 (96 aa).

Belongs to the bacterial ribosomal protein bS6 family.

Functionally, binds together with bS18 to 16S ribosomal RNA. This Heliobacterium modesticaldum (strain ATCC 51547 / Ice1) protein is Small ribosomal subunit protein bS6.